A 458-amino-acid chain; its full sequence is Phosphoglucosamine mutase (458 aa).

Ser-100 acts as the Phosphoserine intermediate in catalysis. Residues Ser-100, Asp-239, Asp-241, and Asp-243 each coordinate Mg(2+). The residue at position 100 (Ser-100) is a Phosphoserine.

The protein belongs to the phosphohexose mutase family. Requires Mg(2+) as cofactor. In terms of processing, activated by phosphorylation.

It catalyses the reaction alpha-D-glucosamine 1-phosphate = D-glucosamine 6-phosphate. In terms of biological role, catalyzes the conversion of glucosamine-6-phosphate to glucosamine-1-phosphate. In Dictyoglomus thermophilum (strain ATCC 35947 / DSM 3960 / H-6-12), this protein is Phosphoglucosamine mutase.